The sequence spans 442 residues: Circumsporozoite protein (442 aa).

Positions 1 to 18 (MMRKLAILSVSSFLFVEA) are cleaved as a signal peptide. Residues 69 to 357 (SRSLGENDDG…VKNNNNEEPS (289 aa)) form a disordered region. Low complexity predominate over residues 81 to 94 (DNGNNNNGNNNNGD). A compositionally biased stretch (basic and acidic residues) spans 95 to 115 (NGREGKDEDKRDGNNEDNEKL). The required for the binding to heparan sulfate proteoglycans (HSPGs) on the surface of host hepatocytes stretch occupies residues 114-121 (KLRKPKHK). The region I; contains the proteolytic cleavage site stretch occupies residues 122-126 (KLKQP). Residues 130–318 (NPDPNANPNV…PNANPNANPN (189 aa)) are compositionally biased toward low complexity. 46 tandem repeats follow at residues 134–137 (NANP), 138–141 (NVDP), 142–145 (NANP), 146–149 (NVDP), 150–153 (NANP), 154–157 (NANP), 158–161 (NANP), 162–165 (NANP), 166–169 (NANP), 170–173 (NANP), 174–177 (NANP), 178–181 (NANP), 182–185 (NANP), 186–189 (NANP), 190–193 (NANP), 194–197 (NANP), 198–201 (NANP), 202–205 (NANP), 206–209 (NANP), 210–213 (NVDP), 214–217 (NANP), 218–221 (NANP), 222–225 (NANP), 226–229 (NANP), 230–233 (NANP), 234–237 (NANP), 238–241 (NANP), 242–245 (NANP), 246–249 (NANP), 250–253 (NANP), 254–257 (NANP), 258–261 (NANP), 262–265 (NANP), 266–269 (NANP), 270–273 (NANP), 274–277 (NANP), 278–281 (NANP), 282–285 (NANP), 286–289 (NANP), 290–293 (NANP), 294–297 (NANP), 298–301 (NANP), 302–305 (NANP), 306–309 (NANP), 310–313 (NANP), and 314–317 (NANP). The 46 X 4 AA tandem repeats of N-[AV]-[ND]-P stretch occupies residues 134-317 (NANPNVDPNA…NPNANPNANP (184 aa)). A compositionally biased stretch (polar residues) spans 319–334 (KNNQGNGQGHNMPNDP). A compositionally biased stretch (low complexity) spans 340 to 354 (ENANANNAVKNNNNE). The TSP type-1 domain maps to 367–420 (KIQNSLSTEWSPCSVTCGNGIQVRIKPGSADKPKDQLDYENDIEKKICKMEKCS). Disulfide bonds link cysteine 379-cysteine 414 and cysteine 383-cysteine 419. An O-linked (Fuc) threonine glycan is attached at threonine 382. Cysteine 419 carries the GPI-anchor amidated cysteine lipid modification. A propeptide spans 420-442 (SSVFNVVNSSIGLIMVLSFLFLN) (removed in mature form).

Belongs to the plasmodium circumsporozoite protein family. During host cell invasion, proteolytically cleaved at the cell membrane in the region I by a papain-like cysteine protease of parasite origin. Cleavage is triggered by the sporozoite contact with highly sulfated heparan sulfate proteoglycans (HSPGs) present on the host hepatocyte cell surface. Cleavage exposes the TSP type-1 (TSR) domain and is required for productive invasion of host hepatocytes but not for adhesion to the host cell membrane. Cleavage is dispensable for sporozoite development in the oocyst, motility and for traversal of host and vector cells. Post-translationally, O-glycosylated; maybe by POFUT2.

The protein localises to the cell membrane. It is found in the cytoplasm. Functionally, essential sporozoite protein. In the mosquito vector, required for sporozoite development in the oocyst, migration through the vector hemolymph and entry into the vector salivary glands. In the vertebrate host, required for sporozoite migration through the host dermis and infection of host hepatocytes. Binds to highly sulfated heparan sulfate proteoglycans (HSPGs) on the surface of host hepatocytes. In terms of biological role, in the vertebrate host, binds to highly sulfated heparan sulfate proteoglycans (HSPGs) on the surface of host hepatocytes and is required for sporozoite invasion of the host hepatocytes. This is Circumsporozoite protein from Plasmodium falciparum (isolate Wellcome).